The sequence spans 294 residues: tRNA pseudouridine synthase B (294 aa).

D39 serves as the catalytic Nucleophile.

Belongs to the pseudouridine synthase TruB family. Type 1 subfamily.

The catalysed reaction is uridine(55) in tRNA = pseudouridine(55) in tRNA. Responsible for synthesis of pseudouridine from uracil-55 in the psi GC loop of transfer RNAs. The chain is tRNA pseudouridine synthase B from Streptococcus pyogenes serotype M2 (strain MGAS10270).